Reading from the N-terminus, the 623-residue chain is Procollagen galactosyltransferase 1 (623 aa).

A signal peptide spans 1–30 (MAAAPRACKGHGRPLPVLLLLLLLALPPLG). Asn97, Asn185, and Asn382 each carry an N-linked (GlcNAc...) asparagine glycan. Basic and acidic residues predominate over residues 589–607 (RAKSQKMREQQALSREAKN). The segment at 589-623 (RAKSQKMREQQALSREAKNSDVLQSPLDSAARDEL) is disordered. The Prevents secretion from ER signature appears at 620–623 (RDEL).

This sequence belongs to the glycosyltransferase 25 family. N-glycosylated.

Its subcellular location is the endoplasmic reticulum lumen. The catalysed reaction is (5R)-5-hydroxy-L-lysyl-[collagen] + UDP-alpha-D-galactose = (5R)-5-O-(beta-D-galactosyl)-5-hydroxy-L-lysyl-[collagen] + UDP + H(+). In terms of biological role, beta-galactosyltransferase that transfers beta-galactose to hydroxylysine residues of type I collagen. By acting on collagen glycosylation, facilitates the formation of collagen triple helix. Also involved in the biosynthesis of collagen type IV. The polypeptide is Procollagen galactosyltransferase 1 (COLGALT1) (Bos taurus (Bovine)).